A 395-amino-acid chain; its full sequence is Na(+)/H(+) antiporter NhaA (395 aa).

The next 11 membrane-spanning stretches (helical) occupy residues 11 to 31, 61 to 81, 96 to 116, 127 to 147, 156 to 176, 179 to 199, 202 to 222, 264 to 284, 295 to 315, 331 to 351, and 366 to 386; these read FAME…ALII, LLLW…GLEV, IVLP…IYWF, GWAI…ALLG, LFLM…IAIF, GTLS…LVAM, MGVV…VCVL, FGIL…GVTL, IAVG…WMAV, VLGV…VGSL, and MGIL…TAAA.

It belongs to the NhaA Na(+)/H(+) (TC 2.A.33) antiporter family.

The protein resides in the cell inner membrane. It carries out the reaction Na(+)(in) + 2 H(+)(out) = Na(+)(out) + 2 H(+)(in). Functionally, na(+)/H(+) antiporter that extrudes sodium in exchange for external protons. This is Na(+)/H(+) antiporter NhaA from Pseudomonas fluorescens (strain ATCC BAA-477 / NRRL B-23932 / Pf-5).